The following is a 347-amino-acid chain: Eukaryotic translation initiation factor 3 subunit I (347 aa).

WD repeat units follow at residues Gly8–Asp49, His51–Thr89, Thr149–Glu190, Val194–Thr233, and Gly291–Lys330.

It belongs to the eIF-3 subunit I family. In terms of assembly, component of the eukaryotic translation initiation factor 3 (eIF-3) complex.

The protein resides in the cytoplasm. Functionally, component of the eukaryotic translation initiation factor 3 (eIF-3) complex, which is involved in protein synthesis of a specialized repertoire of mRNAs and, together with other initiation factors, stimulates binding of mRNA and methionyl-tRNAi to the 40S ribosome. The eIF-3 complex specifically targets and initiates translation of a subset of mRNAs involved in cell proliferation. In Candida glabrata (strain ATCC 2001 / BCRC 20586 / JCM 3761 / NBRC 0622 / NRRL Y-65 / CBS 138) (Yeast), this protein is Eukaryotic translation initiation factor 3 subunit I.